Here is a 341-residue protein sequence, read N- to C-terminus: Heat-inducible transcription repressor HrcA (341 aa).

The protein belongs to the HrcA family.

In terms of biological role, negative regulator of class I heat shock genes (grpE-dnaK-dnaJ and groELS operons). Prevents heat-shock induction of these operons. The protein is Heat-inducible transcription repressor HrcA of Brevibacillus brevis (strain 47 / JCM 6285 / NBRC 100599).